The sequence spans 302 residues: Small ribosomal subunit biogenesis GTPase RsgA (302 aa).

Residues 75–233 (KNELIRPAVS…IMDTPGFSSM (159 aa)) enclose the CP-type G domain. GTP contacts are provided by residues 124 to 127 (NKKD) and 175 to 183 (GPSGVGKSS). Zn(2+) is bound by residues cysteine 257, cysteine 262, histidine 264, and cysteine 270.

This sequence belongs to the TRAFAC class YlqF/YawG GTPase family. RsgA subfamily. Monomer. Associates with 30S ribosomal subunit, binds 16S rRNA. The cofactor is Zn(2+).

The protein resides in the cytoplasm. Its function is as follows. One of several proteins that assist in the late maturation steps of the functional core of the 30S ribosomal subunit. Helps release RbfA from mature subunits. May play a role in the assembly of ribosomal proteins into the subunit. Circularly permuted GTPase that catalyzes slow GTP hydrolysis, GTPase activity is stimulated by the 30S ribosomal subunit. The sequence is that of Small ribosomal subunit biogenesis GTPase RsgA from Agathobacter rectalis (strain ATCC 33656 / DSM 3377 / JCM 17463 / KCTC 5835 / VPI 0990) (Eubacterium rectale).